The following is an 84-amino-acid chain: MSSVEKKPEGVNTGAGDRHNLKTEWPELVGKSVEEAKKVILQDKPEAQIIVLPVGTIVTMEYRIDRVRLFVDKLDNIAQVPRVG.

A disordered region spans residues 1–23 (MSSVEKKPEGVNTGAGDRHNLKT).

This sequence belongs to the protease inhibitor I13 (potato type I serine protease inhibitor) family.

In terms of biological role, inhibits both subtilisin and chymotrypsin. The sequence is that of Subtilisin-chymotrypsin inhibitor-2A from Hordeum vulgare (Barley).